Reading from the N-terminus, the 682-residue chain is E3 ubiquitin-protein ligase RNF103 (682 aa).

Transmembrane regions (helical) follow at residues 6–26 (FFLL…EAIV), 326–346 (LFVL…FITQ), 366–386 (LLII…LDSF), and 411–431 (MFYS…GLLI). Over residues 525–542 (EEMSESSQDTENDSDSDN) the composition is skewed to acidic residues. A disordered region spans residues 525 to 549 (EEMSESSQDTENDSDSDNTDTFSSS). The RING-type zinc-finger motif lies at 618 to 660 (CVVCLENFENGCLLMGLPCGHVFHQNCIVMWLAGGRHCCPVCR).

As to quaternary structure, interacts with DERL1 and VCP. As to expression, expressed in different tissues including hippocampus, cerebral cortex, heart, kidney, spleen and lung. Expression is increased in hippocampus and frontal cortex after chronic treatment with antidepressants.

The protein localises to the endoplasmic reticulum membrane. The catalysed reaction is S-ubiquitinyl-[E2 ubiquitin-conjugating enzyme]-L-cysteine + [acceptor protein]-L-lysine = [E2 ubiquitin-conjugating enzyme]-L-cysteine + N(6)-ubiquitinyl-[acceptor protein]-L-lysine.. The protein operates within protein modification; protein ubiquitination. Acts as an E2-dependent E3 ubiquitin-protein ligase, probably involved in the ER-associated protein degradation pathway. This chain is E3 ubiquitin-protein ligase RNF103 (Rnf103), found in Rattus norvegicus (Rat).